Consider the following 57-residue polypeptide: Small polypeptide DEVIL 20 (57 aa).

Residue Asn5 is glycosylated (N-linked (GlcNAc...) asparagine). The tract at residues 16 to 47 (TFKAKCSHMVRKQRAKFYILGRCLAMLVCGRG) is required for DVL/RTFL small polypeptide activity. Residues 29–45 (RAKFYILGRCLAMLVCG) traverse the membrane as a helical segment.

Belongs to the DVL/RTFL small polypeptides family.

The protein localises to the cell membrane. Its function is as follows. Small polypeptide acting as a regulatory molecule which coordinates cellular responses required for differentiation, growth and development, probably by restricting polar cell proliferation in lateral organs and coordinating socket cell recruitment and differentiation at trichome sites. The chain is Small polypeptide DEVIL 20 from Arabidopsis thaliana (Mouse-ear cress).